We begin with the raw amino-acid sequence, 154 residues long: Lipoprotein signal peptidase (154 aa).

Helical transmembrane passes span 55 to 75 (GHMW…IYIM) and 84 to 104 (LFSI…IDRI). Active-site residues include aspartate 111 and aspartate 129. Residues 124–144 (IFNVADAALSVGVVLMLVYVF) form a helical membrane-spanning segment.

It belongs to the peptidase A8 family.

It localises to the cell membrane. It catalyses the reaction Release of signal peptides from bacterial membrane prolipoproteins. Hydrolyzes -Xaa-Yaa-Zaa-|-(S,diacylglyceryl)Cys-, in which Xaa is hydrophobic (preferably Leu), and Yaa (Ala or Ser) and Zaa (Gly or Ala) have small, neutral side chains.. Its pathway is protein modification; lipoprotein biosynthesis (signal peptide cleavage). Its function is as follows. This protein specifically catalyzes the removal of signal peptides from prolipoproteins. This Listeria innocua serovar 6a (strain ATCC BAA-680 / CLIP 11262) protein is Lipoprotein signal peptidase.